The chain runs to 598 residues: Polypeptide N-acetylgalactosaminyltransferase 17 (598 aa).

Residues 1–6 (MASLRR) lie on the Cytoplasmic side of the membrane. Residues 7–27 (VKVLLVLNLIAVAGFVIFLAK) form a helical; Signal-anchor for type II membrane protein membrane-spanning segment. Residues 28–598 (CRPIAVRSGD…QRWAIKNPIK (571 aa)) lie on the Lumenal side of the membrane. The N-linked (GlcNAc...) asparagine glycan is linked to Asn50. Intrachain disulfides connect Cys142/Cys373 and Cys364/Cys443. The catalytic subdomain A stretch occupies residues 151-262 (LPQISIIFIF…AGWAEPVLSR (112 aa)). Residues Asp192 and Arg223 each coordinate substrate. Asp246, His248, and His378 together coordinate Mn(2+). The tract at residues 319–381 (PIRTPAMIGC…PCSRVAHIER (63 aa)) is catalytic subdomain B. Residues Arg381 and Tyr386 each coordinate substrate. N-linked (GlcNAc...) asparagine glycans are attached at residues Asn461 and Asn486. Residues 465-594 (AYGELRNNKA…SCTGQRWAIK (130 aa)) form the Ricin B-type lectin domain. Intrachain disulfides connect Cys478–Cys494, Cys526–Cys541, and Cys568–Cys586.

It belongs to the glycosyltransferase 2 family. GalNAc-T subfamily. It depends on Mn(2+) as a cofactor.

Its subcellular location is the golgi apparatus membrane. The enzyme catalyses L-seryl-[protein] + UDP-N-acetyl-alpha-D-galactosamine = a 3-O-[N-acetyl-alpha-D-galactosaminyl]-L-seryl-[protein] + UDP + H(+). It carries out the reaction L-threonyl-[protein] + UDP-N-acetyl-alpha-D-galactosamine = a 3-O-[N-acetyl-alpha-D-galactosaminyl]-L-threonyl-[protein] + UDP + H(+). It participates in protein modification; protein glycosylation. Functionally, may catalyze the initial reaction in O-linked oligosaccharide biosynthesis, the transfer of an N-acetyl-D-galactosamine residue to a serine or threonine residue on the protein receptor. The sequence is that of Polypeptide N-acetylgalactosaminyltransferase 17 from Mus musculus (Mouse).